The sequence spans 154 residues: SsrA-binding protein (154 aa).

Belongs to the SmpB family.

It localises to the cytoplasm. Its function is as follows. Required for rescue of stalled ribosomes mediated by trans-translation. Binds to transfer-messenger RNA (tmRNA), required for stable association of tmRNA with ribosomes. tmRNA and SmpB together mimic tRNA shape, replacing the anticodon stem-loop with SmpB. tmRNA is encoded by the ssrA gene; the 2 termini fold to resemble tRNA(Ala) and it encodes a 'tag peptide', a short internal open reading frame. During trans-translation Ala-aminoacylated tmRNA acts like a tRNA, entering the A-site of stalled ribosomes, displacing the stalled mRNA. The ribosome then switches to translate the ORF on the tmRNA; the nascent peptide is terminated with the 'tag peptide' encoded by the tmRNA and targeted for degradation. The ribosome is freed to recommence translation, which seems to be the essential function of trans-translation. The chain is SsrA-binding protein from Staphylococcus aureus (strain Mu3 / ATCC 700698).